The chain runs to 307 residues: 4-hydroxythreonine-4-phosphate dehydrogenase (307 aa).

Substrate-binding residues include H121 and T122. The a divalent metal cation site is built by H150, H189, and H246. 3 residues coordinate substrate: K254, N263, and R272.

Belongs to the PdxA family. As to quaternary structure, homodimer. Requires Zn(2+) as cofactor. The cofactor is Mg(2+). Co(2+) serves as cofactor.

It is found in the cytoplasm. It carries out the reaction 4-(phosphooxy)-L-threonine + NAD(+) = 3-amino-2-oxopropyl phosphate + CO2 + NADH. It participates in cofactor biosynthesis; pyridoxine 5'-phosphate biosynthesis; pyridoxine 5'-phosphate from D-erythrose 4-phosphate: step 4/5. In terms of biological role, catalyzes the NAD(P)-dependent oxidation of 4-(phosphooxy)-L-threonine (HTP) into 2-amino-3-oxo-4-(phosphooxy)butyric acid which spontaneously decarboxylates to form 3-amino-2-oxopropyl phosphate (AHAP). The chain is 4-hydroxythreonine-4-phosphate dehydrogenase from Campylobacter fetus subsp. fetus (strain 82-40).